We begin with the raw amino-acid sequence, 277 residues long: NADPH-dependent 7-cyano-7-deazaguanine reductase (277 aa).

86-88 (IES) serves as a coordination point for substrate. 88–89 (SK) lines the NADPH pocket. Cys184 acts as the Thioimide intermediate in catalysis. Catalysis depends on Asp191, which acts as the Proton donor. 223–224 (HE) provides a ligand contact to substrate. Residue 252 to 253 (RG) participates in NADPH binding.

It belongs to the GTP cyclohydrolase I family. QueF type 2 subfamily. In terms of assembly, homodimer.

The protein resides in the cytoplasm. The enzyme catalyses 7-aminomethyl-7-carbaguanine + 2 NADP(+) = 7-cyano-7-deazaguanine + 2 NADPH + 3 H(+). Its pathway is tRNA modification; tRNA-queuosine biosynthesis. Functionally, catalyzes the NADPH-dependent reduction of 7-cyano-7-deazaguanine (preQ0) to 7-aminomethyl-7-deazaguanine (preQ1). The polypeptide is NADPH-dependent 7-cyano-7-deazaguanine reductase (Chromohalobacter salexigens (strain ATCC BAA-138 / DSM 3043 / CIP 106854 / NCIMB 13768 / 1H11)).